The chain runs to 117 residues: Ig heavy chain V region 23 (117 aa).

An N-terminal signal peptide occupies residues Met-1 to Ser-19. Positions Gln-20 to Thr-49 are framework-1. Residues Cys-41 and Cys-115 are joined by a disulfide bond. Positions Ser-50–His-54 are complementarity-determining-1. Residues Trp-55–Gly-68 are framework-2. The interval Asn-69–Ser-85 is complementarity-determining-2. The interval Lys-86–Arg-117 is framework-3.

The polypeptide is Ig heavy chain V region 23 (Mus musculus (Mouse)).